A 220-amino-acid chain; its full sequence is Small ribosomal subunit protein eS8 (220 aa).

Belongs to the eukaryotic ribosomal protein eS8 family.

The polypeptide is Small ribosomal subunit protein eS8 (RPS8A) (Leishmania major).